A 254-amino-acid polypeptide reads, in one-letter code: Thiazole synthase (254 aa).

The active-site Schiff-base intermediate with DXP is the Lys-95. Residues Gly-156, 182–183 (AG), and 204–205 (NT) each bind 1-deoxy-D-xylulose 5-phosphate.

This sequence belongs to the ThiG family. In terms of assembly, homotetramer. Forms heterodimers with either ThiH or ThiS.

Its subcellular location is the cytoplasm. It carries out the reaction [ThiS sulfur-carrier protein]-C-terminal-Gly-aminoethanethioate + 2-iminoacetate + 1-deoxy-D-xylulose 5-phosphate = [ThiS sulfur-carrier protein]-C-terminal Gly-Gly + 2-[(2R,5Z)-2-carboxy-4-methylthiazol-5(2H)-ylidene]ethyl phosphate + 2 H2O + H(+). It participates in cofactor biosynthesis; thiamine diphosphate biosynthesis. Catalyzes the rearrangement of 1-deoxy-D-xylulose 5-phosphate (DXP) to produce the thiazole phosphate moiety of thiamine. Sulfur is provided by the thiocarboxylate moiety of the carrier protein ThiS. In vitro, sulfur can be provided by H(2)S. The sequence is that of Thiazole synthase from Shewanella sediminis (strain HAW-EB3).